We begin with the raw amino-acid sequence, 865 residues long: Prominin-1 (865 aa).

The signal sequence occupies residues 1 to 19; that stretch reads MALVLGSLLLLGLCGNSFS. The Extracellular portion of the chain corresponds to 20 to 108; that stretch reads GGQPSSTDAP…GLKIVYYEAG (89 aa). Residues 109–129 form a helical membrane-spanning segment; that stretch reads IILCCVLGLLFIILMPLVGYF. Residues 130-157 are Cytoplasmic-facing; that stretch reads FCMCRCCNKCGGEMHQRQKENGPFLRKC. Residues 158-178 traverse the membrane as a helical segment; it reads FAISLLVICIIISIGIFYGFV. Over 179-433 the chain is Extracellular; sequence ANHQVRTRIK…LPTLEEYDSY (255 aa). N-linked (GlcNAc...) asparagine glycosylation occurs at Asn-220. N6-acetyllysine is present on residues Lys-225, Lys-257, and Lys-264. N-linked (GlcNAc...) asparagine glycosylation is found at Asn-274, Asn-395, and Asn-414. Residues 434 to 454 form a helical membrane-spanning segment; sequence WWLGGLVICSLLTLIVIFYYL. The Cytoplasmic segment spans residues 455 to 486; that stretch reads GLLCGVCGYDRHATPTTRGCVSNTGGVFLMVG. The helical transmembrane segment at 487–507 threads the bilayer; it reads VGLSFLFCWILMIIVVLTFVF. Topologically, residues 508-792 are extracellular; that stretch reads GANVEKLICE…LCSYIIDPLN (285 aa). N-linked (GlcNAc...) asparagine glycosylation is found at Asn-548, Asn-580, Asn-729, and Asn-730. A helical membrane pass occupies residues 793-813; the sequence is LFWFGIGKATVFLLPALIFAV. Topologically, residues 814–865 are cytoplasmic; it reads KLAKYYRRMDSEDVYDDVETIPMKNMENGNNGYHKDHVYGIHNPVMTSPSQH. At Ser-863 the chain carries Phosphoserine.

Belongs to the prominin family. Interacts with CDHR1 and with actin filaments. Interacts with NAT8 and NAT8B. Post-translationally, isoform 1 and isoform 2 are glycosylated. Acetylation at Lys-225, Lys-257 and Lys-264 by NAT8 and NAT8B may control PROM1 protein expression and its function in cell apoptosis. In terms of tissue distribution, isoform 1 is selectively expressed on CD34 hematopoietic stem and progenitor cells in adult and fetal bone marrow, fetal liver, cord blood and adult peripheral blood. Isoform 1 is not detected on other blood cells. Isoform 1 is also expressed in a number of non-lymphoid tissues including retina, pancreas, placenta, kidney, liver, lung, brain and heart. Found in saliva within small membrane particles. Isoform 2 is predominantly expressed in fetal liver, skeletal muscle, kidney, and heart as well as adult pancreas, kidney, liver, lung, and placenta. Isoform 2 is highly expressed in fetal liver, low in bone marrow, and barely detectable in peripheral blood. Isoform 2 is expressed on hematopoietic stem cells and in epidermal basal cells (at protein level). Expressed in adult retina by rod and cone photoreceptor cells (at protein level).

Its subcellular location is the apical cell membrane. It is found in the cell projection. It localises to the microvillus membrane. The protein localises to the cilium. The protein resides in the photoreceptor outer segment. Its subcellular location is the endoplasmic reticulum. It is found in the endoplasmic reticulum-Golgi intermediate compartment. May play a role in cell differentiation, proliferation and apoptosis. Binds cholesterol in cholesterol-containing plasma membrane microdomains and may play a role in the organization of the apical plasma membrane in epithelial cells. During early retinal development acts as a key regulator of disk morphogenesis. Involved in regulation of MAPK and Akt signaling pathways. In neuroblastoma cells suppresses cell differentiation such as neurite outgrowth in a RET-dependent manner. This chain is Prominin-1 (PROM1), found in Homo sapiens (Human).